A 468-amino-acid polypeptide reads, in one-letter code: Dihydrolipoyl dehydrogenase (468 aa).

Residues 39-47 (EKGNLGGVC), lysine 56, and alanine 119 each bind FAD. Cysteine 47 and cysteine 52 are joined by a disulfide. Residues 183 to 187 (GGGYI), glutamate 206, and 271 to 274 (TVGR) contribute to the NAD(+) site. Positions 314 and 322 each coordinate FAD. Histidine 446 functions as the Proton acceptor in the catalytic mechanism.

It belongs to the class-I pyridine nucleotide-disulfide oxidoreductase family. As to quaternary structure, homodimer. The cofactor is FAD.

Its subcellular location is the cytoplasm. It localises to the membrane. The catalysed reaction is N(6)-[(R)-dihydrolipoyl]-L-lysyl-[protein] + NAD(+) = N(6)-[(R)-lipoyl]-L-lysyl-[protein] + NADH + H(+). Functionally, lipoamide dehydrogenase is a component of the alpha-ketoacid dehydrogenase complexes. In Staphylococcus aureus (strain COL), this protein is Dihydrolipoyl dehydrogenase (pdhD).